The sequence spans 285 residues: Release factor glutamine methyltransferase (285 aa).

S-adenosyl-L-methionine is bound by residues 119–123 (GTGSG), Glu142, Trp175, and Asn191. Residue 191-194 (NPPY) participates in substrate binding.

This sequence belongs to the protein N5-glutamine methyltransferase family. PrmC subfamily.

It carries out the reaction L-glutaminyl-[peptide chain release factor] + S-adenosyl-L-methionine = N(5)-methyl-L-glutaminyl-[peptide chain release factor] + S-adenosyl-L-homocysteine + H(+). Functionally, methylates the class 1 translation termination release factors RF1/PrfA and RF2/PrfB on the glutamine residue of the universally conserved GGQ motif. This Burkholderia pseudomallei (strain K96243) protein is Release factor glutamine methyltransferase.